The primary structure comprises 157 residues: TGEKPFTCTECGKNFSFTTSFIRHMRIHTGEKPYSCADCGKHFSEKMYLQFHQKNPSECEEYVTLKATLQSHQSVEKPFTCTECGKCFSLSSYLHRHQRLHTGDRPFSCAECGKAFSGKAQLQDHQNTHTGEKPFTCTECGKCFTRKGSLQMHQKIH.

5 consecutive C2H2-type zinc fingers follow at residues 6–28 (FTCT…MRIH), 34–56 (YSCA…QKNP), 79–101 (FTCT…QRLH), 107–129 (FSCA…QNTH), and 135–157 (FTCT…QKIH).

Belongs to the krueppel C2H2-type zinc-finger protein family.

It is found in the nucleus. Its function is as follows. May be involved in transcriptional regulation. The chain is Oocyte zinc finger protein XlCOF2 from Xenopus laevis (African clawed frog).